The chain runs to 218 residues: 3,4-dihydroxy-2-butanone 4-phosphate synthase (218 aa).

D-ribulose 5-phosphate is bound by residues 37–38 (RE), aspartate 42, 150–154 (RGGHT), and glutamate 174. Glutamate 38 contacts Mg(2+). Histidine 153 provides a ligand contact to Mg(2+).

It belongs to the DHBP synthase family. Homodimer. The cofactor is Mg(2+). Requires Mn(2+) as cofactor.

The enzyme catalyses D-ribulose 5-phosphate = (2S)-2-hydroxy-3-oxobutyl phosphate + formate + H(+). It functions in the pathway cofactor biosynthesis; riboflavin biosynthesis; 2-hydroxy-3-oxobutyl phosphate from D-ribulose 5-phosphate: step 1/1. In terms of biological role, catalyzes the conversion of D-ribulose 5-phosphate to formate and 3,4-dihydroxy-2-butanone 4-phosphate. The sequence is that of 3,4-dihydroxy-2-butanone 4-phosphate synthase from Erwinia tasmaniensis (strain DSM 17950 / CFBP 7177 / CIP 109463 / NCPPB 4357 / Et1/99).